Reading from the N-terminus, the 142-residue chain is Large ribosomal subunit protein uL13 (142 aa).

Belongs to the universal ribosomal protein uL13 family. In terms of assembly, part of the 50S ribosomal subunit.

In terms of biological role, this protein is one of the early assembly proteins of the 50S ribosomal subunit, although it is not seen to bind rRNA by itself. It is important during the early stages of 50S assembly. This chain is Large ribosomal subunit protein uL13, found in Actinobacillus pleuropneumoniae serotype 5b (strain L20).